The primary structure comprises 1051 residues: Probable valine--tRNA ligase, mitochondrial (1051 aa).

Residues 1-20 (MNKLLFLSKKSSTSNLYRFY) constitute a mitochondrion transit peptide. Residues 71-81 (PNVTGSLHIGH) carry the 'HIGH' region motif. Positions 606–610 (KMSKS) match the 'KMSKS' region motif. Residue K609 coordinates ATP. The stretch at 972–1019 (KELQISIEFDKEINNQLNQKLINPNQSNDKKILKLENFIKQLQDEIDN) forms a coiled coil.

Belongs to the class-I aminoacyl-tRNA synthetase family.

The protein resides in the mitochondrion. It catalyses the reaction tRNA(Val) + L-valine + ATP = L-valyl-tRNA(Val) + AMP + diphosphate. This is Probable valine--tRNA ligase, mitochondrial (valS2) from Dictyostelium discoideum (Social amoeba).